A 671-amino-acid polypeptide reads, in one-letter code: DNA ligase (671 aa).

NAD(+) is bound by residues 31–35 (DAEYD), 80–81 (SL), and Glu110. The active-site N6-AMP-lysine intermediate is Lys112. Residues Arg133, Glu167, Lys283, and Lys307 each contribute to the NAD(+) site. Zn(2+)-binding residues include Cys401, Cys404, Cys419, and Cys424. Positions 587–671 (EEELVFAGKT…YLPDEGGLNE (85 aa)) constitute a BRCT domain.

The protein belongs to the NAD-dependent DNA ligase family. LigA subfamily. Requires Mg(2+) as cofactor. It depends on Mn(2+) as a cofactor.

It catalyses the reaction NAD(+) + (deoxyribonucleotide)n-3'-hydroxyl + 5'-phospho-(deoxyribonucleotide)m = (deoxyribonucleotide)n+m + AMP + beta-nicotinamide D-nucleotide.. Its function is as follows. DNA ligase that catalyzes the formation of phosphodiester linkages between 5'-phosphoryl and 3'-hydroxyl groups in double-stranded DNA using NAD as a coenzyme and as the energy source for the reaction. It is essential for DNA replication and repair of damaged DNA. The polypeptide is DNA ligase (Listeria monocytogenes serotype 4a (strain HCC23)).